Consider the following 442-residue polypeptide: Cyclic AMP receptor-like protein B (442 aa).

Topologically, residues 1–16 (MGGDIHLCSMILGKNH) are extracellular. The chain crosses the membrane as a helical span at residues 17–37 (LIFLYFANLFGSTLSFLATII). The Cytoplasmic portion of the chain corresponds to 38-219 (TIVFYLVKKY…PKKIDTLIFY (182 aa)). A disordered region spans residues 83-166 (YSSTPISIQN…LSSSDKNNTI (84 aa)). The span at 91-103 (QNNNNKNNNLPKQ) shows a compositional bias: low complexity. The segment covering 112 to 122 (INKNHNNYCNY) has biased composition (polar residues). Positions 123–144 (STSATSSSSSSSSFSSTNSGSS) are enriched in low complexity. The segment covering 145 to 166 (YEYQQPQKNQQTLSSSDKNNTI) has biased composition (polar residues). The helical transmembrane segment at 220–240 (LSISDFIAVSGIIIEQLIIIF) threads the bilayer. At 241-255 (NKEISKSIGFCIGER) the chain is on the extracellular side. The helical transmembrane segment at 256–276 (VSIHFGLLATLFWSNCIAYYL) threads the bilayer. The Cytoplasmic portion of the chain corresponds to 277–289 (LRETYELKPYNIR). Residues 290–310 (FVYFHIVCWGMALIGVASLFF) traverse the membrane as a helical segment. Over 311-334 (SKIITVSNIDQGGSWCSVSSSYQL) the chain is Extracellular. The chain crosses the membrane as a helical span at residues 335-355 (YFWVIPLFVSFTWNLICYCLI). The Cytoplasmic segment spans residues 356-382 (YRKFNKIIGIYGIQSVQIKTIIIRKLS). A helical membrane pass occupies residues 383–403 (FYLLAFLITWVWDVINNSIFL). Residues 404–410 (YEGKCPP) are Extracellular-facing. The chain crosses the membrane as a helical span at residues 411 to 431 (FALWILQEFFSSGYGFFNSLA). The Cytoplasmic portion of the chain corresponds to 432–442 (YAVTTRFYSRK).

The protein belongs to the G-protein coupled receptor 5 family.

The protein localises to the membrane. Functionally, receptor for cAMP. This Dictyostelium discoideum (Social amoeba) protein is Cyclic AMP receptor-like protein B (crlB).